The chain runs to 274 residues: Mitochondrial outer membrane protein porin 4 (274 aa).

An N-acetylglycine modification is found at glycine 2. Serine 76 is subject to Phosphoserine.

Belongs to the eukaryotic mitochondrial porin (TC 1.B.8.1) family. In terms of tissue distribution, widely expressed.

It is found in the cell membrane. It localises to the mitochondrion outer membrane. In terms of biological role, forms a channel through the mitochondrial outer membrane that allows diffusion of small hydrophilic molecules. The channel adopts an open conformation at low or zero membrane potential and a closed conformation at potentials above 30-40 mV. The open state has a weak anion selectivity whereas the closed state is cation-selective. Involved in plant growth and development at the vegetative and reproductive stages. Is important for leaf and pollen development and mitochondrial membrane potential steady state. May be involved in disease resistance. This Arabidopsis thaliana (Mouse-ear cress) protein is Mitochondrial outer membrane protein porin 4 (VDAC4).